We begin with the raw amino-acid sequence, 671 residues long: Annexin A6 (671 aa).

Annexin repeat units follow at residues 18–89 (FNAS…SLMR), 90–161 (PPAY…VLLQ), 173–245 (DLVE…AVVK), 249–320 (STAE…KLCE), 361–432 (FNDD…GLML), 433–504 (TPAQ…SLAL), 519–594 (EDAK…AIVR), and 598–669 (NKPA…LCGG).

This sequence belongs to the annexin family.

The protein resides in the cytoplasm. The protein localises to the melanosome. In terms of biological role, may associate with CD21. May regulate the release of Ca(2+) from intracellular stores. The polypeptide is Annexin A6 (ANXA6) (Gallus gallus (Chicken)).